A 283-amino-acid chain; its full sequence is Adenylate kinase 2, chloroplastic (283 aa).

The transit peptide at 1-59 (MTGCVNSISPPPVTLYRHRASPSRSSFSLSGDALHSLYRHRRVSRSPSIIAPKFQIVAA) directs the protein to the chloroplast. ATP is bound at residue 74–79 (ASGKGT). The tract at residues 94 to 123 (SAGDLLRAEIASGSENGRRAKEHMEKGQLV) is NMP. Residues R100, 121–123 (QLV), 150–153 (GYPR), and Q157 each bind AMP. Residues 187–220 (GRRLDPVTGKIYHLKYSPPETEEIAVRLTQRFDD) are LID. R188 contributes to the ATP binding site. Residues R217 and R228 each coordinate AMP.

Belongs to the adenylate kinase family. Monomer.

The protein resides in the plastid. The protein localises to the chloroplast stroma. It carries out the reaction AMP + ATP = 2 ADP. In terms of biological role, catalyzes the reversible transfer of the terminal phosphate group between ATP and AMP. Plays an important role in cellular energy homeostasis and in adenine nucleotide metabolism. Plays a major role in the equilibration of adenylates and de novo synthesis of ADP in the plastid stroma. This chain is Adenylate kinase 2, chloroplastic, found in Arabidopsis thaliana (Mouse-ear cress).